The primary structure comprises 440 residues: Probable exopolygalacturonase C (440 aa).

The first 21 residues, M1–G21, serve as a signal peptide directing secretion. N-linked (GlcNAc...) asparagine glycans are attached at residues N84 and N151. PbH1 repeat units follow at residues G188–T210, G217–T238, and S240–S261. An N-linked (GlcNAc...) asparagine glycan is attached at N219. The active-site Proton donor is the D231. H255 is an active-site residue. The N-linked (GlcNAc...) asparagine glycan is linked to N271. The stretch at I272–S293 is one PbH1 4 repeat. N313 carries an N-linked (GlcNAc...) asparagine glycan. C389 and C395 are disulfide-bonded. N-linked (GlcNAc...) asparagine glycosylation is present at N434.

This sequence belongs to the glycosyl hydrolase 28 family.

It is found in the secreted. The enzyme catalyses [(1-&gt;4)-alpha-D-galacturonosyl](n) + H2O = alpha-D-galacturonate + [(1-&gt;4)-alpha-D-galacturonosyl](n-1). Its function is as follows. Specific in hydrolyzing the terminal glycosidic bond of polygalacturonic acid and oligogalacturonates. This Aspergillus fumigatus (strain ATCC MYA-4609 / CBS 101355 / FGSC A1100 / Af293) (Neosartorya fumigata) protein is Probable exopolygalacturonase C (pgxC).